Consider the following 563-residue polypeptide: Proline--tRNA ligase (563 aa).

Belongs to the class-II aminoacyl-tRNA synthetase family. ProS type 1 subfamily. As to quaternary structure, homodimer.

Its subcellular location is the cytoplasm. The catalysed reaction is tRNA(Pro) + L-proline + ATP = L-prolyl-tRNA(Pro) + AMP + diphosphate. Functionally, catalyzes the attachment of proline to tRNA(Pro) in a two-step reaction: proline is first activated by ATP to form Pro-AMP and then transferred to the acceptor end of tRNA(Pro). As ProRS can inadvertently accommodate and process non-cognate amino acids such as alanine and cysteine, to avoid such errors it has two additional distinct editing activities against alanine. One activity is designated as 'pretransfer' editing and involves the tRNA(Pro)-independent hydrolysis of activated Ala-AMP. The other activity is designated 'posttransfer' editing and involves deacylation of mischarged Ala-tRNA(Pro). The misacylated Cys-tRNA(Pro) is not edited by ProRS. The chain is Proline--tRNA ligase from Persephonella marina (strain DSM 14350 / EX-H1).